A 490-amino-acid polypeptide reads, in one-letter code: Myocilin (490 aa).

An N-terminal signal peptide occupies residues 1–18 (MPAVQLLLLAGLVWGAGA). Residues 55-170 (SAIQDLQRDS…QEVARLARGQ (116 aa)) are a coiled coil. The interval 168–187 (RGQCPQARDTSQDVPAGSRE) is disordered. Positions 230-489 (GCGELVWVGQ…MVTYDIKLSK (260 aa)) constitute an Olfactomedin-like domain. Cys-231 and Cys-419 are joined by a disulfide. Ca(2+)-binding residues include Asp-366, Asn-414, Ala-415, Ile-463, and Asp-464. The Microbody targeting signal signature appears at 488–490 (SKI).

Homodimer (via N-terminus). Can also form higher oligomers. Interacts with OLFM3, FN1, NRCAM, GLDN and NFASC. Interacts (via N-terminus) with MYL2. Interacts with SFRP1, FRZB, FZD7, FZD10, FZD1 and WIF1; regulates Wnt signaling. Interacts with SNTA1; regulates muscle hypertrophy. Interacts with ERBB2 and ERBB3; activates ERBB2-ERBB3 signaling pathway. Interacts with SNCG; affects its secretion and its aggregation. In terms of processing, palmitoylated. Glycosylated. Post-translationally, undergoes a calcium-dependent proteolytic cleavage at Arg-212 by CAPN2 in the endoplasmic reticulum. The result is the production of two fragments, one of 35 kDa containing the C-terminal olfactomedin-like domain, and another of 20 kDa containing the N-terminal leucine zipper-like domain. In terms of tissue distribution, detected in eye aqueous humor (at protein level).

Its subcellular location is the secreted. It is found in the golgi apparatus. The protein resides in the cytoplasmic vesicle. The protein localises to the extracellular space. It localises to the extracellular matrix. Its subcellular location is the extracellular exosome. It is found in the mitochondrion. The protein resides in the mitochondrion intermembrane space. The protein localises to the mitochondrion inner membrane. It localises to the mitochondrion outer membrane. Its subcellular location is the rough endoplasmic reticulum. It is found in the cell projection. The protein resides in the cilium. The protein localises to the endoplasmic reticulum. Functionally, secreted glycoprotein regulating the activation of different signaling pathways in adjacent cells to control different processes including cell adhesion, cell-matrix adhesion, cytoskeleton organization and cell migration. Promotes substrate adhesion, spreading and formation of focal contacts. Negatively regulates cell-matrix adhesion and stress fiber assembly through Rho protein signal transduction. Modulates the organization of actin cytoskeleton by stimulating the formation of stress fibers through interactions with components of Wnt signaling pathways. Promotes cell migration through activation of PTK2 and the downstream phosphatidylinositol 3-kinase signaling. Plays a role in bone formation and promotes osteoblast differentiation in a dose-dependent manner through mitogen-activated protein kinase signaling. Mediates myelination in the peripheral nervous system through ERBB2/ERBB3 signaling. Plays a role as a regulator of muscle hypertrophy through the components of dystrophin-associated protein complex. Involved in positive regulation of mitochondrial depolarization. Plays a role in neurite outgrowth. May participate in the obstruction of fluid outflow in the trabecular meshwork. In Oryctolagus cuniculus (Rabbit), this protein is Myocilin.